A 307-amino-acid polypeptide reads, in one-letter code: Beta-lactamase (307 aa).

The first 26 residues, 1 to 26 (MKLWFSTLKLKKAAAVLLFSCVALAG), serve as a signal peptide directing secretion. A lipid anchor (N-palmitoyl cysteine) is attached at cysteine 27. Cysteine 27 is lipidated: S-diacylglycerol cysteine. Serine 86 functions as the Acyl-ester intermediate in the catalytic mechanism. Catalysis depends on glutamate 182, which acts as the Proton acceptor. 248–250 (KTG) contributes to the substrate binding site.

It belongs to the class-A beta-lactamase family. Post-translationally, large exopenicillinase is the primary secretion product; it can be converted to small exopenicillinase.

The protein resides in the cell membrane. It carries out the reaction a beta-lactam + H2O = a substituted beta-amino acid. This chain is Beta-lactamase (penP), found in Bacillus licheniformis.